The following is a 424-amino-acid chain: MVAIDLPYDKRTITAQIDDENYAGKLVSQAATYHNKLSEQETVEKSLDNPIGSDKLEELARGKHNIVIISSDHTRPVPSHIITPILLRRLRSVAPDARIRILVATGFHRPSTHEELVNKYGEDIVNNEEIVMHVSTDDSSMVKIGQLPSGGDCIINKVAAEADLLISEGFIESHFFAGFSGGRKSVLPGIASYKTIMANHSGEFINSPKARTGNLMHNSIHKDMVYAARTAKLAFIINVVLDEDKKIIGSFAGDMEAAHKVGCDFVKELSSVPAIDCDIAISTNGGYPLDQNIYQAVKGMTAAEATNKEGGTIIMVAGARDGHGGEGFYHNLADVDDPKEFLDQAINTPRLKTIPDQWTAQIFARILVHHHVIFVSDLVDPDLITNMHMELAKTLDEAMEKAYAREGQAAKVTVIPDGLGVIVK.

A Ni(II)-pyridinium-3,5-bisthiocarboxylate mononucleotide-binding site is contributed by 72–75 (DHTR). Active-site proton donor/acceptor residues include histidine 108 and histidine 174. Ni(II)-pyridinium-3,5-bisthiocarboxylate mononucleotide is bound by residues lysine 184 and histidine 200. 2 residues coordinate substrate: glutamine 295 and lysine 298.

It belongs to the lactate racemase family. In terms of assembly, homodimer. The cofactor is Ni(II)-pyridinium-3,5-bisthiocarboxylate mononucleotide.

It catalyses the reaction (S)-lactate = (R)-lactate. Activation of the apo-enzyme requires the three accessory proteins LarB, LarE and LarC, that are involved in the biosynthesis of the nickel-pincer cofactor of LarA. Inhibited by sulfite that behaves as a mixed inhibitor. In terms of biological role, catalyzes the interconversion between the D- and L-isomers of lactate. May act as a rescue enzyme to ensure D-lactate production in physiological conditions where its production by the D-lactate dehydrogenase LdhD is not sufficient. D-Lactate is absolutely required for growth of L.plantarum and is an essential component of the cell wall peptidoglycan in this species, where it is incorporated as the last residue of the muramoyl-pentadepsipeptide peptidoglycan precursor; its incorporation confers high level of vancomycin resistance. The polypeptide is Lactate racemase (Lactiplantibacillus plantarum (strain ATCC BAA-793 / NCIMB 8826 / WCFS1) (Lactobacillus plantarum)).